Here is a 347-residue protein sequence, read N- to C-terminus: MAIVSSSSGRKSPCRETALVDPQPAPEEQVIRPEDSLRPKRLSEYIGQSELKQVLGIAVEAALGRGEALDHVLLYGPPGLGKTTMALVLAEELGVNCRITSAPALERPRDIVGLLVNLQPRDLLFIDEIHRLSRVAEELLYPAMEDRRLDLTVGKGSTARTRTLDLPPFTLVGATTRAGSLSSPLRDRFGLIQRLEFYGQTDLEAIVARTAELVSVDLTFDACARIAASCRGTPRIANRLLRRVRDVASVRQGKGTIDDAMVAEALSLHRVDHRGLDASDRRLLAMLMDQHGGGPVGLETLAAALGEDPVTLETVVEPFLLQQGLLVRTPRGRMVTDAARSHIAEAA.

Residues 1 to 10 (MAIVSSSSGR) show a composition bias toward polar residues. The tract at residues 1–29 (MAIVSSSSGRKSPCRETALVDPQPAPEEQ) is disordered. Residues 13-198 (PCRETALVDP…FGLIQRLEFY (186 aa)) are large ATPase domain (RuvB-L). Residues Leu37, Arg38, Gly79, Lys82, Thr83, Thr84, Arg188, Tyr198, and Arg235 each coordinate ATP. Thr83 contacts Mg(2+). Positions 199–270 (GQTDLEAIVA…MVAEALSLHR (72 aa)) are small ATPAse domain (RuvB-S). The segment at 273–347 (HRGLDASDRR…AARSHIAEAA (75 aa)) is head domain (RuvB-H). Residues Arg328 and Arg333 each contribute to the DNA site.

Belongs to the RuvB family. As to quaternary structure, homohexamer. Forms an RuvA(8)-RuvB(12)-Holliday junction (HJ) complex. HJ DNA is sandwiched between 2 RuvA tetramers; dsDNA enters through RuvA and exits via RuvB. An RuvB hexamer assembles on each DNA strand where it exits the tetramer. Each RuvB hexamer is contacted by two RuvA subunits (via domain III) on 2 adjacent RuvB subunits; this complex drives branch migration. In the full resolvosome a probable DNA-RuvA(4)-RuvB(12)-RuvC(2) complex forms which resolves the HJ.

It localises to the cytoplasm. It carries out the reaction ATP + H2O = ADP + phosphate + H(+). In terms of biological role, the RuvA-RuvB-RuvC complex processes Holliday junction (HJ) DNA during genetic recombination and DNA repair, while the RuvA-RuvB complex plays an important role in the rescue of blocked DNA replication forks via replication fork reversal (RFR). RuvA specifically binds to HJ cruciform DNA, conferring on it an open structure. The RuvB hexamer acts as an ATP-dependent pump, pulling dsDNA into and through the RuvAB complex. RuvB forms 2 homohexamers on either side of HJ DNA bound by 1 or 2 RuvA tetramers; 4 subunits per hexamer contact DNA at a time. Coordinated motions by a converter formed by DNA-disengaged RuvB subunits stimulates ATP hydrolysis and nucleotide exchange. Immobilization of the converter enables RuvB to convert the ATP-contained energy into a lever motion, pulling 2 nucleotides of DNA out of the RuvA tetramer per ATP hydrolyzed, thus driving DNA branch migration. The RuvB motors rotate together with the DNA substrate, which together with the progressing nucleotide cycle form the mechanistic basis for DNA recombination by continuous HJ branch migration. Branch migration allows RuvC to scan DNA until it finds its consensus sequence, where it cleaves and resolves cruciform DNA. This Synechococcus sp. (strain CC9902) protein is Holliday junction branch migration complex subunit RuvB.